The following is a 389-amino-acid chain: Ethanolamine-phosphate cytidylyltransferase (389 aa).

A disordered region spans residues 1 to 20 (MIRNGRGAAGGAEQPGPGGR). CTP-binding positions include 221–222 (AF), 229–232 (HVDF), Lys259, 307–310 (HGKT), and 336–340 (SGSNL). A Phosphoserine modification is found at Ser338. Phosphothreonine is present on residues Thr341 and Thr342.

Belongs to the cytidylyltransferase family. Strongest expression in liver, heart, and skeletal muscle.

The enzyme catalyses phosphoethanolamine + CTP + H(+) = CDP-ethanolamine + diphosphate. The protein operates within phospholipid metabolism; phosphatidylethanolamine biosynthesis; phosphatidylethanolamine from ethanolamine: step 2/3. Functionally, ethanolamine-phosphate cytidylyltransferase that catalyzes the second step in the synthesis of phosphatidylethanolamine (PE) from ethanolamine via the CDP-ethanolamine pathway. Phosphatidylethanolamine is a dominant inner-leaflet phospholipid in cell membranes, where it plays a role in membrane function by structurally stabilizing membrane-anchored proteins, and participates in important cellular processes such as cell division, cell fusion, blood coagulation, and apoptosis. This Homo sapiens (Human) protein is Ethanolamine-phosphate cytidylyltransferase (PCYT2).